The sequence spans 219 residues: MSDMRRLMILFLLVGLAVVLSGCATLSVHSKVNKDGSVESYKLVINTSSFVYGLLAEGAKKEGYESLRESFLSEIPEEMRDKVSYDEVWSGDQVSIIIEARDYVPADDDKVKIRKENGFLIYEDLSFASENNQTSSNELGNALLSSFSLHYYLEMPGKIVESNANVVKDNKAEWHLTGASAFNTRIYAKSEVPGIPGFEAALAIVGLLAAGLLFGRVKG.

Helical transmembrane passes span 8–28 (MILFLLVGLAVVLSGCATLSV) and 194–214 (GIPGFEAALAIVGLLAAGLLF).

It is found in the cell membrane. This is an uncharacterized protein from Archaeoglobus fulgidus (strain ATCC 49558 / DSM 4304 / JCM 9628 / NBRC 100126 / VC-16).